Reading from the N-terminus, the 152-residue chain is MSEKYVVTWDMLQIHARTMAKLLLPAEQWKGIIAVSRGGLVPGALLARELGIRHVDTVCIASYDHDNQRDLNVLKRAEADGEGFIVVDDLVDTGVTAKAIREMYPKAHFVTIFAKPAGRPLVDDYIIDIPQNTWIEQPWDMGVVFVSPLAGK.

5-phospho-alpha-D-ribose 1-diphosphate-binding positions include 37-38 (RG), arginine 69, and 88-96 (DDLVDTGVT). Arginine 69 lines the GMP pocket. Residue aspartate 89 coordinates Mg(2+). The guanine site is built by aspartate 92 and isoleucine 135. Residues aspartate 92 and isoleucine 135 each contribute to the xanthine site. GMP contacts are provided by residues 92 to 96 (DTGVT) and 134 to 135 (WI).

It belongs to the purine/pyrimidine phosphoribosyltransferase family. XGPT subfamily. Homotetramer. The cofactor is Mg(2+).

The protein localises to the cell inner membrane. It catalyses the reaction GMP + diphosphate = guanine + 5-phospho-alpha-D-ribose 1-diphosphate. The catalysed reaction is XMP + diphosphate = xanthine + 5-phospho-alpha-D-ribose 1-diphosphate. The enzyme catalyses IMP + diphosphate = hypoxanthine + 5-phospho-alpha-D-ribose 1-diphosphate. Its pathway is purine metabolism; GMP biosynthesis via salvage pathway; GMP from guanine: step 1/1. It participates in purine metabolism; XMP biosynthesis via salvage pathway; XMP from xanthine: step 1/1. In terms of biological role, purine salvage pathway enzyme that catalyzes the transfer of the ribosyl-5-phosphate group from 5-phospho-alpha-D-ribose 1-diphosphate (PRPP) to the N9 position of the 6-oxopurines guanine and xanthine to form the corresponding ribonucleotides GMP (guanosine 5'-monophosphate) and XMP (xanthosine 5'-monophosphate), with the release of PPi. To a lesser extent, also acts on hypoxanthine. This is Xanthine-guanine phosphoribosyltransferase from Sodalis glossinidius (strain morsitans).